The sequence spans 178 residues: Oligoribonuclease (178 aa).

The 162-residue stretch at 7–168 (LIWIDLEMTG…DDIRESIAEL (162 aa)) folds into the Exonuclease domain. Tyr-128 is an active-site residue.

Belongs to the oligoribonuclease family.

The protein resides in the cytoplasm. 3'-to-5' exoribonuclease specific for small oligoribonucleotides. This is Oligoribonuclease from Francisella tularensis subsp. tularensis (strain FSC 198).